A 163-amino-acid chain; its full sequence is Allophycocyanin alpha-B chain (163 aa).

N71 carries the post-translational modification N4-methylasparagine. Position 81 (C81) interacts with (2R,3E)-phycocyanobilin.

The protein belongs to the phycobiliprotein family. In terms of assembly, heterodimer of an alpha and a beta chain. Post-translationally, contains one covalently linked bilin chromophore.

The protein localises to the cellular thylakoid membrane. In terms of biological role, light-harvesting photosynthetic bile pigment-protein from the phycobiliprotein complex. Allophycocyanin has a maximum absorption at approximately 650 nanometers. The chain is Allophycocyanin alpha-B chain from Synechococcus sp. (strain ATCC 27144 / PCC 6301 / SAUG 1402/1) (Anacystis nidulans).